Here is a 117-residue protein sequence, read N- to C-terminus: Large ribosomal subunit protein bL19 (117 aa).

The protein belongs to the bacterial ribosomal protein bL19 family.

This protein is located at the 30S-50S ribosomal subunit interface and may play a role in the structure and function of the aminoacyl-tRNA binding site. This chain is Large ribosomal subunit protein bL19, found in Thioalkalivibrio sulfidiphilus (strain HL-EbGR7).